The chain runs to 480 residues: Protein DETOXIFICATION 15 (480 aa).

Transmembrane regions (helical) follow at residues G36–V56, I69–M89, L118–G138, I143–L163, V180–L200, G208–V228, L255–V275, V294–G314, R326–I346, V360–F380, I396–L416, and W428–F448.

This sequence belongs to the multi antimicrobial extrusion (MATE) (TC 2.A.66.1) family.

The protein localises to the membrane. The polypeptide is Protein DETOXIFICATION 15 (Arabidopsis thaliana (Mouse-ear cress)).